The chain runs to 234 residues: Protein XNDC1N (234 aa).

The chain is Protein XNDC1N from Homo sapiens (Human).